Reading from the N-terminus, the 404-residue chain is Pectate lyase E (404 aa).

The signal sequence occupies residues 1-41 (MNNSRMSSVSTQKTTGRSALGTKSALAAIIATTMMVSVASA). 2 residues coordinate Ca(2+): Asp182 and Asp225. Arg278 is a catalytic residue.

The protein belongs to the polysaccharide lyase 1 family. PLBC subfamily. Ca(2+) serves as cofactor.

It localises to the secreted. The catalysed reaction is Eliminative cleavage of (1-&gt;4)-alpha-D-galacturonan to give oligosaccharides with 4-deoxy-alpha-D-galact-4-enuronosyl groups at their non-reducing ends.. Its pathway is glycan metabolism; pectin degradation; 2-dehydro-3-deoxy-D-gluconate from pectin: step 2/5. Functionally, involved in maceration and soft-rotting of plant tissue. Pectate lyases have been implicated as pathogenicity factors which induce maceration or rotting of plant tissue. PelE is sufficient to induce these effects under laboratory conditions. The protein is Pectate lyase E (pelE) of Dickeya dadantii (strain 3937) (Erwinia chrysanthemi (strain 3937)).